The chain runs to 317 residues: Tenomodulin (317 aa).

Topologically, residues 1-30 (MAKNPPENCEDCHILNAEAFKSKKICKSLK) are cytoplasmic. A helical; Signal-anchor for type II membrane protein transmembrane segment spans residues 31–50 (ICGLVFGILALTLIVLFWGS). At 51-317 (KHFWPEVPKK…WWVARMLGRV (267 aa)) the chain is on the extracellular side. The 94-residue stretch at 93-186 (GNGTDETLEV…ICDNVTMYWI (94 aa)) folds into the BRICHOS domain. An N-linked (GlcNAc...) asparagine glycan is attached at Asn-94. Cysteines 120 and 178 form a disulfide. Asn-180 is a glycosylation site (N-linked (GlcNAc...) asparagine). Ser-239 is modified (phosphoserine).

The protein belongs to the chondromodulin-1 family. As to expression, highly expressed in hypovascular connective tissues such as tendons. Also has strong expression in adipose tissue.

The protein resides in the membrane. The protein localises to the nucleus envelope. It is found in the cytoplasm. May be an angiogenesis inhibitor. This is Tenomodulin (TNMD) from Homo sapiens (Human).